Here is a 480-residue protein sequence, read N- to C-terminus: Serine carboxypeptidase-like 35 (480 aa).

Residues 1 to 20 form the signal peptide; sequence MKKNALWLLCILVLPAIACG. N-linked (GlcNAc...) asparagine glycans are attached at residues Asn79 and Asn146. Cystine bridges form between Cys95–Cys363, Cys257–Cys270, and Cys294–Cys331. Ser188 is a catalytic residue. Asn265 carries an N-linked (GlcNAc...) asparagine glycan. Asn352 carries an N-linked (GlcNAc...) asparagine glycan. Residues Asp399 and His452 contribute to the active site.

The protein belongs to the peptidase S10 family. As to expression, expressed in seedlings, flowers and siliques.

The protein localises to the secreted. In terms of biological role, probable carboxypeptidase. The sequence is that of Serine carboxypeptidase-like 35 (SCPL35) from Arabidopsis thaliana (Mouse-ear cress).